A 215-amino-acid polypeptide reads, in one-letter code: UPF0502 protein PSEEN2299 (215 aa).

It belongs to the UPF0502 family.

In Pseudomonas entomophila (strain L48), this protein is UPF0502 protein PSEEN2299.